We begin with the raw amino-acid sequence, 142 residues long: Nucleoside diphosphate kinase (142 aa).

ATP contacts are provided by K11, F59, R87, T93, R104, and N114. H117 (pros-phosphohistidine intermediate) is an active-site residue.

It belongs to the NDK family. As to quaternary structure, homotetramer. Requires Mg(2+) as cofactor.

Its subcellular location is the cytoplasm. The enzyme catalyses a 2'-deoxyribonucleoside 5'-diphosphate + ATP = a 2'-deoxyribonucleoside 5'-triphosphate + ADP. The catalysed reaction is a ribonucleoside 5'-diphosphate + ATP = a ribonucleoside 5'-triphosphate + ADP. Functionally, major role in the synthesis of nucleoside triphosphates other than ATP. The ATP gamma phosphate is transferred to the NDP beta phosphate via a ping-pong mechanism, using a phosphorylated active-site intermediate. In Yersinia pseudotuberculosis serotype O:1b (strain IP 31758), this protein is Nucleoside diphosphate kinase.